The chain runs to 233 residues: Large ribosomal subunit protein uL3 (233 aa).

Residues 145-172 (FGSQRASHGNSRSHRVPGSIGQAQDPGR) are disordered. Residue Gln168 is modified to N5-methylglutamine.

It belongs to the universal ribosomal protein uL3 family. Part of the 50S ribosomal subunit. Forms a cluster with proteins L14 and L19. Methylated by PrmB.

Its function is as follows. One of the primary rRNA binding proteins, it binds directly near the 3'-end of the 23S rRNA, where it nucleates assembly of the 50S subunit. The protein is Large ribosomal subunit protein uL3 of Bordetella petrii (strain ATCC BAA-461 / DSM 12804 / CCUG 43448).